A 252-amino-acid chain; its full sequence is 3-deoxy-manno-octulosonate cytidylyltransferase (252 aa).

The protein belongs to the KdsB family.

The protein localises to the cytoplasm. The catalysed reaction is 3-deoxy-alpha-D-manno-oct-2-ulosonate + CTP = CMP-3-deoxy-beta-D-manno-octulosonate + diphosphate. It participates in nucleotide-sugar biosynthesis; CMP-3-deoxy-D-manno-octulosonate biosynthesis; CMP-3-deoxy-D-manno-octulosonate from 3-deoxy-D-manno-octulosonate and CTP: step 1/1. Its pathway is bacterial outer membrane biogenesis; lipopolysaccharide biosynthesis. In terms of biological role, activates KDO (a required 8-carbon sugar) for incorporation into bacterial lipopolysaccharide in Gram-negative bacteria. In Xylella fastidiosa (strain Temecula1 / ATCC 700964), this protein is 3-deoxy-manno-octulosonate cytidylyltransferase.